A 312-amino-acid polypeptide reads, in one-letter code: ADIPOR-like receptor IZH4 (312 aa).

Positions 1–38 (MVSLTTIEQSPVKCETTTEKESNDTRGTDSNENAETKE) are disordered. Residues 1–64 (MVSLTTIEQS…YKNKSSRNES (64 aa)) lie on the Cytoplasmic side of the membrane. A compositionally biased stretch (basic and acidic residues) spans 16-38 (TTTEKESNDTRGTDSNENAETKE). The helical transmembrane segment at 65 to 85 (LVALIYLLGSMLSFCLLIFFT) threads the bilayer. Over 86 to 101 (DFYLIPLFPTTTTMTD) the chain is Lumenal. The helical transmembrane segment at 102–122 (YIVFNFYLLNVFVFCMVHFIY) threads the bilayer. The Cytoplasmic portion of the chain corresponds to 123 to 141 (HFVKNISLQQHLEHWQKFS). The chain crosses the membrane as a helical span at residues 142–162 (YLSNINLLISSQITILYYLFY). Residues 163–165 (DYV) lie on the Lumenal side of the membrane. The helical transmembrane segment at 166–186 (FFFKIFTLLMNFIGLVAYFFI) threads the bilayer. At 187 to 201 (LTDKLISSKRFNKTV) the chain is on the cytoplasmic side. Residues 202-222 (FFISVSVVCCSLPLLTAIITF) form a helical membrane-spanning segment. Over 223–231 (DGLENLKER) the chain is Lumenal. A helical membrane pass occupies residues 232–252 (IKVNAITWELVALVAASIIYV). Topologically, residues 253 to 277 (TRFPESLFRRNKKEEGWNHSEYLFH) are cytoplasmic. Residues 278–298 (LLISGTAFYHFFILIQSYILM) form a helical membrane-spanning segment. The Lumenal portion of the chain corresponds to 299-312 (HSSLNQPELINFKS).

It belongs to the ADIPOR family.

It localises to the endoplasmic reticulum membrane. Its function is as follows. ADIPOR-like receptor involved in zinc metabolism either by altering membrane sterol content or by directly altering cellular zinc levels. The chain is ADIPOR-like receptor IZH4 (IZH4) from Saccharomyces cerevisiae (strain ATCC 204508 / S288c) (Baker's yeast).